The primary structure comprises 449 residues: Exodeoxyribonuclease 7 large subunit (449 aa).

It belongs to the XseA family. In terms of assembly, heterooligomer composed of large and small subunits.

The protein resides in the cytoplasm. The enzyme catalyses Exonucleolytic cleavage in either 5'- to 3'- or 3'- to 5'-direction to yield nucleoside 5'-phosphates.. In terms of biological role, bidirectionally degrades single-stranded DNA into large acid-insoluble oligonucleotides, which are then degraded further into small acid-soluble oligonucleotides. This chain is Exodeoxyribonuclease 7 large subunit, found in Latilactobacillus sakei subsp. sakei (strain 23K) (Lactobacillus sakei subsp. sakei).